The chain runs to 239 residues: Uridylate kinase (239 aa).

12 to 15 (KLSG) is a binding site for ATP. Gly-53 is a binding site for UMP. 2 residues coordinate ATP: Gly-54 and Arg-58. UMP is bound by residues Asp-73 and 135 to 142 (TGSPCFTT). The ATP site is built by Thr-162, Tyr-168, and Asp-171.

It belongs to the UMP kinase family. In terms of assembly, homohexamer.

It localises to the cytoplasm. It catalyses the reaction UMP + ATP = UDP + ADP. It functions in the pathway pyrimidine metabolism; CTP biosynthesis via de novo pathway; UDP from UMP (UMPK route): step 1/1. With respect to regulation, inhibited by UTP. Catalyzes the reversible phosphorylation of UMP to UDP. This chain is Uridylate kinase, found in Ruthia magnifica subsp. Calyptogena magnifica.